Consider the following 440-residue polypeptide: Cytochrome c biogenesis protein Ccs1 (440 aa).

Transmembrane regions (helical) follow at residues Leu25 to Ile45, Thr84 to Ser104, and Leu170 to Leu190.

The protein belongs to the Ccs1/CcsB family. May interact with CcsA.

It is found in the plastid. Its subcellular location is the chloroplast thylakoid membrane. Required during biogenesis of c-type cytochromes (cytochrome c6 and cytochrome f) at the step of heme attachment. The chain is Cytochrome c biogenesis protein Ccs1 from Pyropia yezoensis (Susabi-nori).